The sequence spans 321 residues: Sex-lethal homolog (321 aa).

RRM domains follow at residues 78–156 and 164–244; these read TNLI…FARP and TNLY…VAEE.

Expressed in gonads and somatic tissues of both sexes. In the ovary, expressed in the last egg chamber of each ovariole. Highly expressed in nurse cells with low expression found in oocytes. Highly expressed in testis with lower expression in testis sheath and vas deferentia.

It localises to the nucleus. Unknown; apparently not involved in somatic sex determination. This chain is Sex-lethal homolog (SXL), found in Megaselia scalaris (Humpbacked fly).